We begin with the raw amino-acid sequence, 395 residues long: Succinate--CoA ligase [ADP-forming] subunit beta (395 aa).

One can recognise an ATP-grasp domain in the interval 9-240 (RDVFEKHGVP…AASADPLEAK (232 aa)). Residues Lys49, 56 to 58 (GRG), Ala98, and Glu103 contribute to the ATP site. Asn195 and Asp209 together coordinate Mg(2+). Residues Asn260 and 322-324 (GIT) each bind substrate.

Belongs to the succinate/malate CoA ligase beta subunit family. Heterotetramer of two alpha and two beta subunits. The cofactor is Mg(2+).

It carries out the reaction succinate + ATP + CoA = succinyl-CoA + ADP + phosphate. It catalyses the reaction GTP + succinate + CoA = succinyl-CoA + GDP + phosphate. Its pathway is carbohydrate metabolism; tricarboxylic acid cycle; succinate from succinyl-CoA (ligase route): step 1/1. Functionally, succinyl-CoA synthetase functions in the citric acid cycle (TCA), coupling the hydrolysis of succinyl-CoA to the synthesis of either ATP or GTP and thus represents the only step of substrate-level phosphorylation in the TCA. The beta subunit provides nucleotide specificity of the enzyme and binds the substrate succinate, while the binding sites for coenzyme A and phosphate are found in the alpha subunit. The protein is Succinate--CoA ligase [ADP-forming] subunit beta of Beutenbergia cavernae (strain ATCC BAA-8 / DSM 12333 / CCUG 43141 / JCM 11478 / NBRC 16432 / NCIMB 13614 / HKI 0122).